Here is a 234-residue protein sequence, read N- to C-terminus: Serum amyloid P-component (234 aa).

A signal peptide spans 1-22 (MDKLLSLLGVSILAGLLLEAFA). The 200-residue stretch at 27 to 226 (TGKVFVFPRQ…YAVIRPRCVA (200 aa)) folds into the Pentraxin (PTX) domain. N-linked (GlcNAc...) asparagine glycosylation is present at N54. A disulfide bridge connects residues C58 and C117. 5 residues coordinate Ca(2+): N81, E158, Q159, D160, and Q170.

This sequence belongs to the pentraxin family. Homopentamer. Pentraxin (or pentaxin) have a discoid arrangement of 5 non-covalently bound subunits. Requires Ca(2+) as cofactor.

It is found in the secreted. This Mesocricetus auratus (Golden hamster) protein is Serum amyloid P-component (APCS).